The primary structure comprises 285 residues: Eukaryotic translation initiation factor 3 subunit F-2 (285 aa).

The 135-residue stretch at Val-11–Gly-145 folds into the MPN domain.

It belongs to the eIF-3 subunit F family. As to quaternary structure, component of the eukaryotic translation initiation factor 3 (eIF-3) complex. The eIF-3 complex interacts with pix.

Its subcellular location is the cytoplasm. Functionally, component of the eukaryotic translation initiation factor 3 (eIF-3) complex, which is involved in protein synthesis of a specialized repertoire of mRNAs and, together with other initiation factors, stimulates binding of mRNA and methionyl-tRNAi to the 40S ribosome. The eIF-3 complex specifically targets and initiates translation of a subset of mRNAs involved in cell proliferation. The sequence is that of Eukaryotic translation initiation factor 3 subunit F-2 from Drosophila ananassae (Fruit fly).